A 361-amino-acid polypeptide reads, in one-letter code: dTDP-glucose 4,6-dehydratase (361 aa).

Residues 11–12 (FI), 32–35 (DKLT), 58–59 (DI), 80–84 (LAAES), and T99 contribute to the NAD(+) site. S84 lines the substrate pocket. T133 contacts substrate. D134 acts as the Proton donor in catalysis. Catalysis depends on proton acceptor residues E135 and Y167. 167–171 (YSASK) is an NAD(+) binding site. N196 contributes to the substrate binding site. An NAD(+)-binding site is contributed by N197. Substrate is bound by residues 206–207 (KL), 222–224 (PIY), R231, N266, and 296–300 (DRPGH).

The protein belongs to the NAD(P)-dependent epimerase/dehydratase family. dTDP-glucose dehydratase subfamily. As to quaternary structure, homodimer. It depends on NAD(+) as a cofactor.

The catalysed reaction is dTDP-alpha-D-glucose = dTDP-4-dehydro-6-deoxy-alpha-D-glucose + H2O. It functions in the pathway carbohydrate biosynthesis; dTDP-L-rhamnose biosynthesis. The protein operates within bacterial outer membrane biogenesis; LPS O-antigen biosynthesis. Functionally, catalyzes the dehydration of dTDP-D-glucose to form dTDP-6-deoxy-D-xylo-4-hexulose via a three-step process involving oxidation, dehydration and reduction. The sequence is that of dTDP-glucose 4,6-dehydratase (rfbB) from Shigella flexneri.